Here is a 97-residue protein sequence, read N- to C-terminus: Serine protease inhibitor Kazal-type 8 (97 aa).

The N-terminal stretch at 1-21 (MKGICSDAILVLATSMWMAFA) is a signal peptide. Residues 36 to 96 (DKTIVECLKN…TKLYDGQCEN (61 aa)) form the Kazal-like domain. 3 cysteine pairs are disulfide-bonded: cysteine 42–cysteine 76, cysteine 49–cysteine 73, and cysteine 62–cysteine 94. A glycan (N-linked (GlcNAc...) asparagine) is linked at asparagine 85.

It localises to the secreted. Functionally, probable serine protease inhibitor. This Homo sapiens (Human) protein is Serine protease inhibitor Kazal-type 8 (SPINK8).